Here is a 296-residue protein sequence, read N- to C-terminus: Acetylglutamate kinase (296 aa).

Residues 68–69 (GG), arginine 90, and asparagine 195 each bind substrate.

The protein belongs to the acetylglutamate kinase family. ArgB subfamily.

The protein localises to the cytoplasm. It carries out the reaction N-acetyl-L-glutamate + ATP = N-acetyl-L-glutamyl 5-phosphate + ADP. It participates in amino-acid biosynthesis; L-arginine biosynthesis; N(2)-acetyl-L-ornithine from L-glutamate: step 2/4. Catalyzes the ATP-dependent phosphorylation of N-acetyl-L-glutamate. This Desulfotalea psychrophila (strain LSv54 / DSM 12343) protein is Acetylglutamate kinase.